A 182-amino-acid polypeptide reads, in one-letter code: P21 prophage-derived terminase small subunit (182 aa).

Residue 31–36 (SKGSKG) participates in ATP binding.

It belongs to the terminase small subunit family. In terms of assembly, heterooligomer of gp1 and gp2.

Its function is as follows. Involved in the initiation of the phage DNA packaging into the prohead. Processes replicating concatemeric DNA into pieces of unit length with cohesive ends. This is P21 prophage-derived terminase small subunit (nohA) from Escherichia coli O6:H1 (strain CFT073 / ATCC 700928 / UPEC).